The sequence spans 95 residues: Microcin E492 immunity protein (95 aa).

The next 3 membrane-spanning stretches (helical) occupy residues 1–21 (MTLL…FCII), 35–55 (VIVL…TKVY), and 67–87 (YLFC…ILTI).

This sequence belongs to the MceB microcin immunity protein family.

Its subcellular location is the cell inner membrane. In terms of biological role, protect the producing cell against microcin E492. The protein is Microcin E492 immunity protein of Klebsiella pneumoniae.